The sequence spans 591 residues: Probable anion transporter 4, chloroplastic (591 aa).

A disordered region spans residues Met1 to Arg38. The N-terminal 76 residues, Met1–Val76, are a transit peptide targeting the chloroplast. The segment covering Ser8–Pro36 has biased composition (polar residues). 11 helical membrane passes run Val184 to Ile204, Val220 to Ile240, Val249 to Ala269, Ile271 to Met291, Leu313 to Ile333, Phe336 to Trp356, Val402 to Trp422, Leu440 to Ala460, Lys475 to Val495, Ala531 to Ala551, and Val565 to Thr585.

It belongs to the major facilitator superfamily. Sodium/anion cotransporter (TC 2.A.1.14) family.

The protein localises to the plastid. It localises to the chloroplast membrane. In terms of biological role, probable anion transporter. This chain is Probable anion transporter 4, chloroplastic (PHT4;4), found in Oryza sativa subsp. japonica (Rice).